The primary structure comprises 699 residues: Endoplasmic reticulum mannosyl-oligosaccharide 1,2-alpha-mannosidase (699 aa).

The Cytoplasmic segment spans residues 1-84 (MAACEGRRSG…WKQLSRLQRN (84 aa)). A helical; Signal-anchor for type II membrane protein transmembrane segment spans residues 85 to 105 (MILFLLAFLLFCGLLFYINLA). The Lumenal segment spans residues 106-699 (DHWKALAFRL…AHPLPIWTPA (594 aa)). The disordered stretch occupies residues 125–243 (IAGLKPANPP…LPPARTQGTP (119 aa)). Residues 176-201 (DLKDGTQEEATKRQEAPVDPRPEGDP) show a composition bias toward basic and acidic residues. The Proton donor role is filled by Glu-330. Residue Asp-463 is part of the active site. Cys-527 and Cys-556 are joined by a disulfide. Glu-570 serves as the catalytic Proton donor. Glu-599 is a catalytic residue. Thr-688 is a binding site for Ca(2+).

It belongs to the glycosyl hydrolase 47 family. Requires Ca(2+) as cofactor. Widely expressed.

The protein resides in the endoplasmic reticulum membrane. It catalyses the reaction N(4)-(alpha-D-Man-(1-&gt;2)-alpha-D-Man-(1-&gt;2)-alpha-D-Man-(1-&gt;3)-[alpha-D-Man-(1-&gt;2)-alpha-D-Man-(1-&gt;3)-[alpha-D-Man-(1-&gt;2)-alpha-D-Man-(1-&gt;6)]-alpha-D-Man-(1-&gt;6)]-beta-D-Man-(1-&gt;4)-beta-D-GlcNAc-(1-&gt;4)-beta-D-GlcNAc)-L-asparaginyl-[protein] (N-glucan mannose isomer 9A1,2,3B1,2,3) + 4 H2O = N(4)-(alpha-D-Man-(1-&gt;3)-[alpha-D-Man-(1-&gt;3)-[alpha-D-Man-(1-&gt;6)]-alpha-D-Man-(1-&gt;6)]-beta-D-Man-(1-&gt;4)-beta-D-GlcNAc-(1-&gt;4)-beta-D-GlcNAc)-L-asparaginyl-[protein] (N-glucan mannose isomer 5A1,2) + 4 beta-D-mannose. The catalysed reaction is N(4)-(alpha-D-Man-(1-&gt;2)-alpha-D-Man-(1-&gt;2)-alpha-D-Man-(1-&gt;3)-[alpha-D-Man-(1-&gt;3)-[alpha-D-Man-(1-&gt;2)-alpha-D-Man-(1-&gt;6)]-alpha-D-Man-(1-&gt;6)]-beta-D-Man-(1-&gt;4)-beta-D-GlcNAc-(1-&gt;4)-beta-D-GlcNAc)-L-asparaginyl-[protein] (N-glucan mannose isomer 8A1,2,3B1,3) + 3 H2O = N(4)-(alpha-D-Man-(1-&gt;3)-[alpha-D-Man-(1-&gt;3)-[alpha-D-Man-(1-&gt;6)]-alpha-D-Man-(1-&gt;6)]-beta-D-Man-(1-&gt;4)-beta-D-GlcNAc-(1-&gt;4)-beta-D-GlcNAc)-L-asparaginyl-[protein] (N-glucan mannose isomer 5A1,2) + 3 beta-D-mannose. It functions in the pathway protein modification; protein glycosylation. Its activity is regulated as follows. Inhibited by both 1-deoxymannojirimycin (dMNJ) and kifunensine. Functionally, involved in glycoprotein quality control targeting of misfolded glycoproteins for degradation. It primarily trims a single alpha-1,2-linked mannose residue from Man(9)GlcNAc(2) to produce Man(8)GlcNAc(2), but at high enzyme concentrations, as found in the ER quality control compartment (ERQC), it further trims the carbohydrates to Man(5-6)GlcNAc(2). In Homo sapiens (Human), this protein is Endoplasmic reticulum mannosyl-oligosaccharide 1,2-alpha-mannosidase (MAN1B1).